We begin with the raw amino-acid sequence, 192 residues long: MSFTKIEQKLKEFTIDAGRYPSINTNEQLKELEMNIGNQLPSDYKDFLKKYGGCYLESKKTTDEIEYDVCYKPLEKDPWMGKGDDTQLLEGFYGLANDHNSLQKAIDTYSDRFPRNIIPIASSAGGNEICMDIDNGKILFWDHELSHPDKDFFLIANSFEEFVFSLVDEPIEADKEDDGILYIELDDDLLSS.

The chain is SPbeta prophage-derived uncharacterized protein YokK (yokK) from Bacillus subtilis (strain 168).